The sequence spans 730 residues: Procollagen-lysine,2-oxoglutarate 5-dioxygenase 1 (730 aa).

Residues 1–20 form the signal peptide; it reads MVPPAVLLPWVVLPLLGVQG. 3 N-linked (GlcNAc...) asparagine glycosylation sites follow: Asn200, Asn403, and Asn541. In terms of domain architecture, Fe2OG dioxygenase spans 639–730; sequence QFELAFVVRY…RYIAVSFIDP (92 aa). Positions 659 and 661 each coordinate Fe cation. Asn689 is a glycosylation site (N-linked (GlcNAc...) asparagine). Position 711 (His711) interacts with Fe cation. Residue Arg721 is part of the active site.

Homodimer. The cofactor is Fe(2+). L-ascorbate is required as a cofactor.

The protein localises to the rough endoplasmic reticulum membrane. It carries out the reaction L-lysyl-[collagen] + 2-oxoglutarate + O2 = (5R)-5-hydroxy-L-lysyl-[collagen] + succinate + CO2. Its function is as follows. Forms hydroxylysine residues in -Xaa-Lys-Gly- sequences in collagens. These hydroxylysines serve as sites of attachment for carbohydrate units and are essential for the stability of the intermolecular collagen cross-links. The chain is Procollagen-lysine,2-oxoglutarate 5-dioxygenase 1 (PLOD1) from Gallus gallus (Chicken).